The chain runs to 394 residues: Elongation factor Tu (394 aa).

The region spanning 10 to 204 is the tr-type G domain; the sequence is KPHVNIGTIG…AVDEYIPTPD (195 aa). The segment at 19–26 is G1; that stretch reads GHIDHGKT. Residue 19 to 26 coordinates GTP; the sequence is GHIDHGKT. A Mg(2+)-binding site is contributed by threonine 26. The tract at residues 60 to 64 is G2; it reads GITIN. The tract at residues 81-84 is G3; the sequence is DCPG. Residues 81-85 and 136-139 contribute to the GTP site; these read DCPGH and NKCD. The segment at 136-139 is G4; it reads NKCD. The G5 stretch occupies residues 174 to 176; that stretch reads SAL.

The protein belongs to the TRAFAC class translation factor GTPase superfamily. Classic translation factor GTPase family. EF-Tu/EF-1A subfamily. In terms of assembly, monomer.

The protein localises to the cytoplasm. The enzyme catalyses GTP + H2O = GDP + phosphate + H(+). GTP hydrolase that promotes the GTP-dependent binding of aminoacyl-tRNA to the A-site of ribosomes during protein biosynthesis. The protein is Elongation factor Tu of Mycoplasmoides gallisepticum (strain R(low / passage 15 / clone 2)) (Mycoplasma gallisepticum).